The chain runs to 228 residues: DNA-3-methyladenine glycosylase 1 (228 aa).

The active-site Proton acceptor is the Asp170.

The protein belongs to the alkylbase DNA glycosidase AlkA family.

The catalysed reaction is Hydrolysis of alkylated DNA, releasing 3-methyladenine, 3-methylguanine, 7-methylguanine and 7-methyladenine.. Its function is as follows. Hydrolysis of the deoxyribose N-glycosidic bond to excise 3-methyladenine or 7-methyladenine from the damaged DNA polymer formed by alkylation lesions. Can release ethylated and propylated bases from DNA in addition to 3-methyladenine. This chain is DNA-3-methyladenine glycosylase 1 (mag1), found in Schizosaccharomyces pombe (strain 972 / ATCC 24843) (Fission yeast).